Consider the following 316-residue polypeptide: Serpentine receptor class delta-45 (316 aa).

7 helical membrane-spanning segments follow: residues Val8–Ile28, Ile42–Ile62, Tyr91–Leu111, Val128–Leu148, Ile184–Leu204, Leu234–Ala254, and Phe266–Val286.

Belongs to the nematode receptor-like protein srd family.

It localises to the membrane. The sequence is that of Serpentine receptor class delta-45 (srd-45) from Caenorhabditis elegans.